Here is a 446-residue protein sequence, read N- to C-terminus: Tubulin beta-1 chain (446 aa).

Residues Q11, E69, S138, G142, T143, G144, N204, and N226 each coordinate GTP. Residue E69 participates in Mg(2+) binding.

This sequence belongs to the tubulin family. As to quaternary structure, dimer of alpha and beta chains. A typical microtubule is a hollow water-filled tube with an outer diameter of 25 nm and an inner diameter of 15 nM. Alpha-beta heterodimers associate head-to-tail to form protofilaments running lengthwise along the microtubule wall with the beta-tubulin subunit facing the microtubule plus end conferring a structural polarity. Microtubules usually have 13 protofilaments but different protofilament numbers can be found in some organisms and specialized cells. The cofactor is Mg(2+).

It localises to the cytoplasm. The protein resides in the cytoskeleton. Functionally, tubulin is the major constituent of microtubules, a cylinder consisting of laterally associated linear protofilaments composed of alpha- and beta-tubulin heterodimers. Microtubules grow by the addition of GTP-tubulin dimers to the microtubule end, where a stabilizing cap forms. Below the cap, tubulin dimers are in GDP-bound state, owing to GTPase activity of alpha-tubulin. In Suillus bovinus (Jersey cow bolete), this protein is Tubulin beta-1 chain (TUBB1).